A 408-amino-acid polypeptide reads, in one-letter code: Histone acetyltransferase type B subunit 2 (408 aa).

WD repeat units follow at residues 120–160 (KHEQ…KDHG), 167–207 (YHKE…NKSP), 213–253 (VHTD…AIQK), 255–295 (SVSS…KPLH), and 299–339 (GHED…AEQQ). Residues 341-345 (DDAYD) are interaction with the histone H4 N-terminus. One copy of the WD 6 repeat lies at 356-396 (GHRSPVNEFSHNSNVPWLMCSVEEENVLQIWKPANKIVRPP).

Belongs to the WD repeat RBAP46/RBAP48/MSI1 family. In terms of assembly, component of the HAT-B complex composed of at least HAT1 and HAT2. The HAT-B complex binds to histone H4 tail.

The protein localises to the cytoplasm. Its subcellular location is the nucleus. Regulatory subunit of the histone acetylase B (HAT-B) complex. The complex acetylates 'Lys-12' of histone H4 which is required for telomeric silencing. This Kluyveromyces lactis (strain ATCC 8585 / CBS 2359 / DSM 70799 / NBRC 1267 / NRRL Y-1140 / WM37) (Yeast) protein is Histone acetyltransferase type B subunit 2 (HAT2).